The sequence spans 102 residues: Co-chaperonin GroES (102 aa).

This sequence belongs to the GroES chaperonin family. As to quaternary structure, heptamer of 7 subunits arranged in a ring. Interacts with the chaperonin GroEL.

The protein localises to the cytoplasm. Together with the chaperonin GroEL, plays an essential role in assisting protein folding. The GroEL-GroES system forms a nano-cage that allows encapsulation of the non-native substrate proteins and provides a physical environment optimized to promote and accelerate protein folding. GroES binds to the apical surface of the GroEL ring, thereby capping the opening of the GroEL channel. In Chlamydia trachomatis serovar L2 (strain ATCC VR-902B / DSM 19102 / 434/Bu), this protein is Co-chaperonin GroES.